The following is a 310-amino-acid chain: Putative HTH-type transcriptional regulatory protein LS215_1371 (310 aa).

One can recognise an HTH cro/C1-type domain in the interval 125–180 (LKHKREEMGYSIGDVAKFLGVSRKAIYDYEKGDSDVSLEVAEKLIDLFGDDIIGDV). A DNA-binding region (H-T-H motif) is located at residues 136–155 (IGDVAKFLGVSRKAIYDYEK).

The protein is Putative HTH-type transcriptional regulatory protein LS215_1371 of Saccharolobus islandicus (strain L.S.2.15 / Lassen #1) (Sulfolobus islandicus).